Here is a 118-residue protein sequence, read N- to C-terminus: Large ribosomal subunit protein bL19 (118 aa).

Belongs to the bacterial ribosomal protein bL19 family.

This protein is located at the 30S-50S ribosomal subunit interface and may play a role in the structure and function of the aminoacyl-tRNA binding site. The sequence is that of Large ribosomal subunit protein bL19 from Salinispora tropica (strain ATCC BAA-916 / DSM 44818 / JCM 13857 / NBRC 105044 / CNB-440).